Reading from the N-terminus, the 180-residue chain is Free methionine-R-sulfoxide reductase (180 aa).

Residues 99 to 177 (GVCGTAASTK…KLAKLINKSC (79 aa)) form the GAF domain.

This sequence belongs to the free Met sulfoxide reductase family.

The protein resides in the cytoplasm. The protein localises to the nucleus. The catalysed reaction is [thioredoxin]-disulfide + L-methionine + H2O = L-methionine (R)-S-oxide + [thioredoxin]-dithiol. Its function is as follows. Catalyzes the reversible oxidation-reduction of the R-enantiomer of free methionine sulfoxide to methionine. Does not act on S-enantiomer of free methionine sulfoxide or R-enantiomer of dabsylated methionine sulfoxide. Involved in protection against oxidative stress. The sequence is that of Free methionine-R-sulfoxide reductase from Saccharomyces cerevisiae (strain ATCC 204508 / S288c) (Baker's yeast).